We begin with the raw amino-acid sequence, 157 residues long: Endoribonuclease YbeY (157 aa).

3 residues coordinate Zn(2+): histidine 114, histidine 118, and histidine 124.

The protein belongs to the endoribonuclease YbeY family. The cofactor is Zn(2+).

It localises to the cytoplasm. In terms of biological role, single strand-specific metallo-endoribonuclease involved in late-stage 70S ribosome quality control and in maturation of the 3' terminus of the 16S rRNA. The protein is Endoribonuclease YbeY of Yersinia pestis.